We begin with the raw amino-acid sequence, 239 residues long: Transmembrane emp24 domain-containing protein 6 (239 aa).

The first 21 residues, 1–21 (MFPLLLVAELVVLSLVTSVKS), serve as a signal peptide directing secretion. The Lumenal segment spans residues 22 to 200 (QETDPLHGSK…FFLLQSNYTY (179 aa)). Residues 53–138 (IECFWQFADQ…SIQVYLNFGV (86 aa)) enclose the GOLD domain. 2 N-linked (GlcNAc...) asparagine glycosylation sites follow: asparagine 156 and asparagine 197. The chain crosses the membrane as a helical span at residues 201 to 223 (VNWWSTAQSLAIVLSGALQLYFL). Residues 224–239 (KRLFTASTTDTKKPRC) lie on the Cytoplasmic side of the membrane.

The protein belongs to the EMP24/GP25L family.

Its subcellular location is the endoplasmic reticulum membrane. The chain is Transmembrane emp24 domain-containing protein 6 (Tmed6) from Mus musculus (Mouse).